The chain runs to 216 residues: Protein Syd (216 aa).

Belongs to the Syd family.

Its subcellular location is the cell inner membrane. Functionally, interacts with the SecY protein in vivo. May bind preferentially to an uncomplexed state of SecY, thus functioning either as a chelating agent for excess SecY in the cell or as a regulatory factor that negatively controls the translocase function. This is Protein Syd from Shewanella baltica (strain OS195).